The primary structure comprises 575 residues: Arginine--tRNA ligase (575 aa).

The 'HIGH' region signature appears at alanine 130 to histidine 140.

It belongs to the class-I aminoacyl-tRNA synthetase family. Monomer.

Its subcellular location is the cytoplasm. The enzyme catalyses tRNA(Arg) + L-arginine + ATP = L-arginyl-tRNA(Arg) + AMP + diphosphate. This is Arginine--tRNA ligase from Magnetococcus marinus (strain ATCC BAA-1437 / JCM 17883 / MC-1).